A 145-amino-acid polypeptide reads, in one-letter code: Transcription antitermination protein NusB (145 aa).

The protein belongs to the NusB family.

In terms of biological role, involved in transcription antitermination. Required for transcription of ribosomal RNA (rRNA) genes. Binds specifically to the boxA antiterminator sequence of the ribosomal RNA (rrn) operons. The chain is Transcription antitermination protein NusB from Acidothermus cellulolyticus (strain ATCC 43068 / DSM 8971 / 11B).